Reading from the N-terminus, the 516-residue chain is Putative sel1-like repeat-containing protein R850 (516 aa).

2 Sel1-like repeats span residues 103–138 and 230–265; these read ALTYNNLGFIYHNDIFKKNKVIKVISHYCKAVNMNS and SISQYSIGTKYLGGDVTNRKYQKGIIYLKNSAKQGD.

The sequence is that of Putative sel1-like repeat-containing protein R850 from Acanthamoeba polyphaga (Amoeba).